The primary structure comprises 368 residues: Terpene cyclase penA (368 aa).

Helical transmembrane passes span Ile-10–Ile-30, Leu-81–Met-101, Leu-118–Met-138, Leu-192–His-212, Phe-233–Ile-253, and Leu-334–Ala-354.

Belongs to the membrane-bound ascI terpene cyclase family.

Its subcellular location is the membrane. It participates in secondary metabolite biosynthesis. Its function is as follows. Part of the gene cluster that mediates the biosynthesis of the indole diterpenes penitrems. The geranylgeranyl diphosphate (GGPP) synthase penG catalyzes the first step in penitrem biosynthesis via conversion of farnesyl pyrophosphate and isopentyl pyrophosphate into geranylgeranyl pyrophosphate (GGPP). Condensation of indole-3-glycerol phosphate with GGPP by the prenyl transferase penC then forms 3-geranylgeranylindole (3-GGI). Epoxidation by the FAD-dependent monooxygenase penM leads to a epoxidized-GGI that is substrate of the terpene cyclase penB for cyclization to yield paspaline. Paspaline is subsequently converted to 13-desoxypaxilline by the cytochrome P450 monooxygenase penP, the latter being then converted to paxilline by the cytochrome P450 monooxygenase penQ. Paxilline is converted to beta-paxitriol via C-10 ketoreduction by the short-chain dehydrogenase PC-15 which can be monoprenylated at the C-20 by the indole diterpene prenyltransferase penD. A two-step elimination (acetylation and elimination) process performed by the O-acetyltransferase PC-16 and the P.simplicissimum ptmI-ortholog not yet identified in P.crustosum, leads to the production of the prenylated form of penijanthine. The FAD-linked oxidoreductase ptmO then converts the prenylated form of penijanthine into PC-M5 which is in turn transformed into PC-M4 by the aromatic dimethylallyltransferase PC-22. A series of oxidation steps involving 4 cytochrome P450 monooxygenases (PC-21, PC-05, PC-23, PC-20) and a FAD-dependent monooxygenase (PC-14) are required for the transformation of PC-M4 to penitrems A and E. Synthesis of these final products is proposed to proceed via penitrems D and C (PC-21, PC-05, PC-14) and penitrems B and F (PC-21, PC-05, PC-14, PC-23). This chain is Terpene cyclase penA, found in Penicillium crustosum (Blue mold fungus).